Reading from the N-terminus, the 334-residue chain is Tryptophan--tRNA ligase (334 aa).

ATP contacts are provided by residues 12-14 (QPS) and 20-21 (GN). The 'HIGH' region signature appears at 13 to 21 (PSGIPTLGN). L-tryptophan is bound at residue Asp136. Residues 148–150 (GKD), Ile187, and 196–200 (KMSKS) contribute to the ATP site. A 'KMSKS' region motif is present at residues 196–200 (KMSKS).

It belongs to the class-I aminoacyl-tRNA synthetase family. In terms of assembly, homodimer.

The protein localises to the cytoplasm. It catalyses the reaction tRNA(Trp) + L-tryptophan + ATP = L-tryptophyl-tRNA(Trp) + AMP + diphosphate + H(+). Its function is as follows. Catalyzes the attachment of tryptophan to tRNA(Trp). In Wigglesworthia glossinidia brevipalpis, this protein is Tryptophan--tRNA ligase.